The chain runs to 247 residues: Adenylate kinase (247 aa).

42-47 is a binding site for ATP; that stretch reads GAGKGT. An NMP region spans residues 62 to 91; that stretch reads ATGDMLRAQVTAKTELGVQAKKIMDQGGLV. Residues threonine 63, arginine 68, 89–91, 118–121, and glutamine 125 each bind AMP; these read GLV and GFPR. The segment at 159–196 is LID; sequence GRLVHPASGRSYHKLFNPPKKEMTDDQTGEPLVQRSDD. Residues arginine 160 and 169 to 170 each bind ATP; that span reads SY. The tract at residues 169 to 191 is disordered; sequence SYHKLFNPPKKEMTDDQTGEPLV. Residues arginine 193 and arginine 204 each coordinate AMP. Glutamine 232 is a binding site for ATP.

The protein belongs to the adenylate kinase family. AK2 subfamily. As to quaternary structure, monomer.

Its subcellular location is the cytoplasm. It localises to the cytosol. The protein resides in the mitochondrion intermembrane space. It carries out the reaction AMP + ATP = 2 ADP. Catalyzes the reversible transfer of the terminal phosphate group between ATP and AMP. Plays an important role in cellular energy homeostasis and in adenine nucleotide metabolism. Adenylate kinase activity is critical for regulation of the phosphate utilization and the AMP de novo biosynthesis pathways. This chain is Adenylate kinase, found in Meyerozyma guilliermondii (strain ATCC 6260 / CBS 566 / DSM 6381 / JCM 1539 / NBRC 10279 / NRRL Y-324) (Yeast).